The chain runs to 150 residues: Small heat shock protein HspE (150 aa).

The sHSP domain occupies 27–137 (VDNGDTYPPY…KPRQIAIDVA (111 aa)).

The protein belongs to the small heat shock protein (HSP20) family.

This is Small heat shock protein HspE (hspE) from Bradyrhizobium diazoefficiens (strain JCM 10833 / BCRC 13528 / IAM 13628 / NBRC 14792 / USDA 110).